Consider the following 276-residue polypeptide: MTENRIPLAGVIGCPIAHSKSPQLHRHWLKTYGVDGHYMPMHVEPEDLESVVRMMPRMGFVGANVTIPHKQSIMEIADKVTDRAKLMGAANTLIFHEDGAIVADNTDGYGFITNLHEGAPDWDAKSGPATVFGAGGASRAVIASLIEAGVPEIRLTNRTRSRAKEVAQTFGSKVTAVDWVEAGNVIEDASLVVNTTSLGMTGQRRLRVPLDGLHSGIVVTDLVYNPLKTELLQAAEEAGCTVVDGLGMLLHQAVPGFERWFGQRPEVNSAARDAIL.

Shikimate-binding positions include 19-21 (SKS) and Thr-66. Catalysis depends on Lys-70, which acts as the Proton acceptor. Residue Asp-82 participates in NADP(+) binding. Asn-91 and Asp-107 together coordinate shikimate. Residues 133–137 (GAGGA), 157–162 (NRTRSR), and Leu-222 contribute to the NADP(+) site. Tyr-224 lines the shikimate pocket. An NADP(+)-binding site is contributed by Gly-245.

Belongs to the shikimate dehydrogenase family. As to quaternary structure, homodimer.

It carries out the reaction shikimate + NADP(+) = 3-dehydroshikimate + NADPH + H(+). It functions in the pathway metabolic intermediate biosynthesis; chorismate biosynthesis; chorismate from D-erythrose 4-phosphate and phosphoenolpyruvate: step 4/7. Involved in the biosynthesis of the chorismate, which leads to the biosynthesis of aromatic amino acids. Catalyzes the reversible NADPH linked reduction of 3-dehydroshikimate (DHSA) to yield shikimate (SA). This chain is Shikimate dehydrogenase (NADP(+)), found in Ruegeria sp. (strain TM1040) (Silicibacter sp.).